A 460-amino-acid chain; its full sequence is Argininosuccinate lyase (460 aa).

It belongs to the lyase 1 family. Argininosuccinate lyase subfamily.

Its subcellular location is the cytoplasm. It carries out the reaction 2-(N(omega)-L-arginino)succinate = fumarate + L-arginine. Its pathway is amino-acid biosynthesis; L-arginine biosynthesis; L-arginine from L-ornithine and carbamoyl phosphate: step 3/3. The chain is Argininosuccinate lyase from Lacticaseibacillus paracasei (strain ATCC 334 / BCRC 17002 / CCUG 31169 / CIP 107868 / KCTC 3260 / NRRL B-441) (Lactobacillus paracasei).